A 31-amino-acid polypeptide reads, in one-letter code: Monocyclic monoterpene ketone monooxygenase (31 aa).

20-25 (GAGFXG) contacts FAD.

In terms of assembly, monomer. FAD is required as a cofactor.

The catalysed reaction is 1-hydroxylimonen-2-one + NADPH + O2 = 3-isopropenyl-6-oxoheptanoate + NADP(+) + H2O. It carries out the reaction (1R,4S)-1-hydroxylimonen-2-one + NADPH + O2 + H(+) = (4S,7S)-7-hydroxy-4-isopropenyl-7-methyloxepan-2-one + NADP(+) + H2O. It catalyses the reaction (1S,4R)-1-hydroxylimonen-2-one + NADPH + O2 + H(+) = (4R,7R)-7-hydroxy-4-isopropenyl-7-methyloxepan-2-one + NADP(+) + H2O. The enzyme catalyses (1R,4R)-dihydrocarvone + NADPH + O2 + H(+) = (4R,7R)-4-isopropenyl-7-methyloxepan-2-one + NADP(+) + H2O. The catalysed reaction is (1S,4R)-menthone + NADPH + O2 + H(+) = (4S,7R)-7-isopropyl-4-methyloxepan-2-one + NADP(+) + H2O. It carries out the reaction (1R,4S)-menthone + NADPH + O2 + H(+) = (4R,7S)-7-isopropyl-4-methyloxepan-2-one + NADP(+) + H2O. It catalyses the reaction (1S,4R)-isodihydrocarvone + NADPH + O2 + H(+) = (3S,6R)-6-isopropenyl-3-methyloxepan-2-one + NADP(+) + H2O. The protein operates within terpene metabolism; monoterpene degradation. Its function is as follows. Catalyzes the NADPH- and oxygen-dependent oxidation of the monocyclic monoterpene ketones 1-hydroxy-2-oxolimonene, dihydrocarvone and menthone. Is able to convert all enantiomers of these natural substrates with almost equal efficiency. Is thus involved in the conversion of the monocyclic monoterpene ketone intermediates formed in the degradation pathways of all stereoisomers of three different monocyclic monoterpenes, i.e. limonene, (dihydro)carveol and menthol, which likely make R.erythropolis able to grow on these compounds as the sole source of carbon and energy. In Rhodococcus erythropolis (Arthrobacter picolinophilus), this protein is Monocyclic monoterpene ketone monooxygenase.